A 655-amino-acid chain; its full sequence is MENLEKNTKKKIKKPNNFKKNNKDKTEELKDKPTPRMFKMTPKSSKFLHQLGVTGRKHTEKPVPLNDPDYEKKIREIQAKEAKKIRSDEVVNNNSKKQNNNKQAKKKANKNKKQKGNNNNFQNNKKPENWKQKPAANNQVKAIPNSEKSTAKTAINLIIKRTFETLKQNNLIAPNLKQNPNKKDKPQQPNVAAKNNNQKEVKKPYNNFVNNQKNHNKNNAGNKGDNKQPTKPLNQSKLSKSTIVELPFTPNFTSNQPKPTQKEDSKKVKAKKAENSQPQESNKQVKKLEVKTNQQKQDQTKKKQPKENKNQQIKAVNLNNNQQKTNNNNQKNSVDKSENDNNKKKSEANQKQENLNPNNNNKKKEDSKNESNNIPLINKNISDQQIVKISNYIKDNYPVIYADLKEKNRLGFNSNLDDDKLIVYANYEAKDLELLLKKFKVVTNNIGLYEEALTHNSYANEMHLKYNYQRLEFLGDAIINKIVAEYLFNHSDSSEGEMTKDRIKIIQSNTLIKAATQLELINYIRVGEGLKIAPLSPKILEDIFEAFIGAMYLDQGEYAVRKILNDTIIGYYQKGQLTENTDYKSIFQEIIHSTGLNMKIHYERTYDRQKNLHTVSLYAGGIMYGEGKDSSTHKAEIKAAKEAISKFRGLLKLEK.

Disordered regions lie at residues 1–148 (MENL…NSEK) and 171–376 (LIAP…NIPL). The tract at residues 1–400 (MENLEKNTKK…NYIKDNYPVI (400 aa)) is unknown. Residues 8–20 (TKKKIKKPNNFKK) are compositionally biased toward basic residues. 2 stretches are compositionally biased toward basic and acidic residues: residues 21 to 34 (NNKDKTEELKDKPT) and 69 to 89 (DYEKKIREIQAKEAKKIRSDE). Positions 92–102 (NNNSKKQNNNK) are enriched in low complexity. A compositionally biased stretch (basic residues) spans 103–115 (QAKKKANKNKKQK). Polar residues predominate over residues 135–148 (AANNQVKAIPNSEK). The segment covering 206–223 (NNFVNNQKNHNKNNAGNK) has biased composition (low complexity). Polar residues-rich tracts occupy residues 229–242 (PTKPLNQSKLSKST) and 250–259 (PNFTSNQPKP). 2 stretches are compositionally biased toward basic and acidic residues: residues 260 to 274 (TQKEDSKKVKAKKAE) and 298 to 309 (DQTKKKQPKENK). Residues 310–332 (NQQIKAVNLNNNQQKTNNNNQKN) show a composition bias toward low complexity. The span at 333-350 (SVDKSENDNNKKKSEANQ) shows a compositional bias: basic and acidic residues. Residues 351 to 360 (KQENLNPNNN) show a composition bias toward low complexity. Residues 401–655 (YADLKEKNRL…KFRGLLKLEK (255 aa)) are RNase 3. Residues 432-556 (LELLLKKFKV…FIGAMYLDQG (125 aa)) enclose the RNase III domain. Residue glutamate 472 coordinates Mg(2+). Aspartate 476 is a catalytic residue. Mg(2+) contacts are provided by aspartate 542 and glutamate 545. Residue glutamate 545 is part of the active site. The DRBM domain maps to 582 to 649 (DYKSIFQEII…AKEAISKFRG (68 aa)).

It belongs to the ribonuclease III family. As to quaternary structure, homodimer. The cofactor is Mg(2+).

It localises to the cytoplasm. The catalysed reaction is Endonucleolytic cleavage to 5'-phosphomonoester.. Functionally, digests double-stranded RNA. Involved in the processing of primary rRNA transcript to yield the immediate precursors to the large and small rRNAs (23S and 16S). Processes some mRNAs, and tRNAs when they are encoded in the rRNA operon. Processes pre-crRNA and tracrRNA of type II CRISPR loci if present in the organism. The sequence is that of Ribonuclease 3 (rnc) from Mycoplasmoides gallisepticum (strain R(low / passage 15 / clone 2)) (Mycoplasma gallisepticum).